A 101-amino-acid polypeptide reads, in one-letter code: Small ribosomal subunit protein uS10 (101 aa).

It belongs to the universal ribosomal protein uS10 family. As to quaternary structure, part of the 30S ribosomal subunit.

In terms of biological role, involved in the binding of tRNA to the ribosomes. The sequence is that of Small ribosomal subunit protein uS10 from Mycoplasmopsis synoviae (strain 53) (Mycoplasma synoviae).